The primary structure comprises 207 residues: Thymidylate kinase (207 aa).

7 to 14 (GCEGTGKT) is an ATP binding site.

Belongs to the thymidylate kinase family.

It carries out the reaction dTMP + ATP = dTDP + ADP. Its function is as follows. Phosphorylation of dTMP to form dTDP in both de novo and salvage pathways of dTTP synthesis. This is Thymidylate kinase from Onion yellows phytoplasma (strain OY-M).